A 291-amino-acid polypeptide reads, in one-letter code: Small ribosomal subunit biogenesis GTPase RsgA 2 (291 aa).

Residues 63–221 enclose the CP-type G domain; the sequence is ENALVRPPVA…VADTPGFSSI (159 aa). Residues 112–115 and 164–172 contribute to the GTP site; these read SKMD and GQSGVGKST. Residues cysteine 245, cysteine 250, histidine 252, and cysteine 258 each coordinate Zn(2+).

It belongs to the TRAFAC class YlqF/YawG GTPase family. RsgA subfamily. Monomer. Associates with 30S ribosomal subunit, binds 16S rRNA. Zn(2+) is required as a cofactor.

It localises to the cytoplasm. In terms of biological role, one of several proteins that assist in the late maturation steps of the functional core of the 30S ribosomal subunit. Helps release RbfA from mature subunits. May play a role in the assembly of ribosomal proteins into the subunit. Circularly permuted GTPase that catalyzes slow GTP hydrolysis, GTPase activity is stimulated by the 30S ribosomal subunit. This chain is Small ribosomal subunit biogenesis GTPase RsgA 2, found in Listeria monocytogenes serovar 1/2a (strain ATCC BAA-679 / EGD-e).